Reading from the N-terminus, the 297-residue chain is MLREMLGCCKVYISEARNKTALEAIERALKPFPPAAIVNKFEDAAYGRVGYTVVSSLANGSSSSLKNAVFAMVKTALDTINLELHCGSHPRLGVVDHICFHPLSQTSIEQVSSVANSLAMDIGSILRVPTYLYGAAEKEQCTLDSIRRKLGYFKANREGHEWAGGFDLEMVPLKPDAGPQEVSKAKGVVAVGACGWVSNYNVPVMSNDLKAVRRIARKTSERGGGLASVQTMALVHGEGVIEVACNLLNPSQVGGDEVQGLIERLGREEGLLVGKGYYTDYTPDQIVERYMDLLNNS.

A formiminotransferase N-subdomain region spans residues 2-196; that stretch reads LREMLGCCKV…GVVAVGACGW (195 aa). The active-site For formimidoyltransferase activity is His-89. Residue 178 to 187 participates in folate binding; the sequence is GPQEVSKAKG.

This sequence belongs to the formiminotransferase family. In terms of tissue distribution, expressed constitutively in roots, stems, leaves and flowers.

The protein resides in the golgi apparatus. It localises to the trans-Golgi network. It carries out the reaction (6S)-5-formyl-5,6,7,8-tetrahydrofolate + L-glutamate = N-formyl-L-glutamate + (6S)-5,6,7,8-tetrahydrofolate + H(+). The enzyme catalyses 5-formimidoyltetrahydrofolate + L-glutamate = N-formimidoyl-L-glutamate + (6S)-5,6,7,8-tetrahydrofolate. The protein operates within one-carbon metabolism; tetrahydrofolate interconversion. Involved in the regulation of root growth. May regulate sorting and/or transportation of trans-Golgi network (TGN) vesicles in root cap peripheral cells, thus influencing the extracellular secretion of mucilage components in the root cap. This chain is Formiminotransferase cyclodeaminase-like protein, found in Arabidopsis thaliana (Mouse-ear cress).